The sequence spans 293 residues: Protoheme IX farnesyltransferase (293 aa).

Transmembrane regions (helical) follow at residues 9–29, 38–58, 86–106, 111–131, 137–157, 167–187, 211–231, 234–254, and 271–291; these read LIKP…FLLA, YIIL…SCVL, FVKN…LFLG, LLTI…YSLW, IYST…GYCT, WLLF…ITIF, IHMI…TVLG, SYTF…TGWY, and ILSI…SIFI.

It belongs to the UbiA prenyltransferase family. Protoheme IX farnesyltransferase subfamily.

The protein resides in the cell inner membrane. It catalyses the reaction heme b + (2E,6E)-farnesyl diphosphate + H2O = Fe(II)-heme o + diphosphate. The protein operates within porphyrin-containing compound metabolism; heme O biosynthesis; heme O from protoheme: step 1/1. Converts heme B (protoheme IX) to heme O by substitution of the vinyl group on carbon 2 of heme B porphyrin ring with a hydroxyethyl farnesyl side group. This Blochmanniella floridana protein is Protoheme IX farnesyltransferase.